We begin with the raw amino-acid sequence, 40 residues long: MADTTGRIPLWIIGTVTGIPVIGLIGIFFYGSYSGLGSSL.

A helical membrane pass occupies residues 8 to 28 (IPLWIIGTVTGIPVIGLIGIF).

This sequence belongs to the PsbJ family. In terms of assembly, PSII is composed of 1 copy each of membrane proteins PsbA, PsbB, PsbC, PsbD, PsbE, PsbF, PsbH, PsbI, PsbJ, PsbK, PsbL, PsbM, PsbT, PsbX, PsbY, PsbZ, Psb30/Ycf12, at least 3 peripheral proteins of the oxygen-evolving complex and a large number of cofactors. It forms dimeric complexes.

It is found in the plastid. The protein localises to the chloroplast thylakoid membrane. One of the components of the core complex of photosystem II (PSII). PSII is a light-driven water:plastoquinone oxidoreductase that uses light energy to abstract electrons from H(2)O, generating O(2) and a proton gradient subsequently used for ATP formation. It consists of a core antenna complex that captures photons, and an electron transfer chain that converts photonic excitation into a charge separation. In Citrus sinensis (Sweet orange), this protein is Photosystem II reaction center protein J.